A 1048-amino-acid chain; its full sequence is Transcription factor mef2A (1048 aa).

In terms of domain architecture, MADS-box spans 1–61 (MGRNKITIEK…NKLFQYSSRD (61 aa)). The span at 74 to 85 (DNTRKNLTNQDY) shows a compositional bias: polar residues. Disordered regions lie at residues 74–263 (DNTR…QAAQ), 294–339 (QQQH…QQQQ), 386–812 (GIYG…NINT), and 916–1048 (LLLT…EPKN). Residues 97–110 (DDEDGDDDGDEDLG) are compositionally biased toward acidic residues. Composition is skewed to low complexity over residues 130–205 (NNNN…NANH), 212–263 (GNSA…QAAQ), 294–303 (QQQHQQQQQN), 327–339 (QQQQ…QQQQ), 393–437 (PPQM…IMNK), 446–466 (YYDY…NSNG), and 481–500 (QQQS…HQSP). Residues 249–304 (NNNSNGYQQQQQAAQQAVQQAQMAQQMHLQQQQQYQQLQHIQQQQQQQHQQQQQNM) are a coiled coil. A compositionally biased stretch (polar residues) spans 506 to 522 (YSPQQQSPVLNSQNGHH). Over residues 529–539 (HQMHHQQHQHQ) the composition is skewed to basic residues. Residues 540–593 (QHPQMQQQQQQQQQHQQHPQMQQIQQQQHPQMQQHQQHQQQHPQMQQQHMNNHQ) show a composition bias toward low complexity. The segment covering 600-618 (NSSPEINSQKNVHSSPLIM) has biased composition (polar residues). Over residues 619 to 699 (NSNNNNNNNN…NSNNGNNNNN (81 aa)) the composition is skewed to low complexity. The segment covering 715 to 736 (SSPTIPEQPSINVSTSSNSAHV) has biased composition (polar residues). Composition is skewed to low complexity over residues 738–802 (NNIT…SSST), 924–960 (SNNS…SSSS), and 982–1029 (NNNN…NNSN).

The protein resides in the nucleus. In terms of biological role, transcription factor that regulates cell differentiation during development. Seems to negatively regulate prestalk gene expression and positively regulate prespore gene expression. The protein is Transcription factor mef2A (mef2A) of Dictyostelium discoideum (Social amoeba).